Consider the following 144-residue polypeptide: Cytochrome c-type biogenesis protein CcmE (144 aa).

Residues 1-7 (MTRKQKR) are Cytoplasmic-facing. Residues 8–28 (LAVIGSGMGFLALAAALTFYA) traverse the membrane as a helical; Signal-anchor for type II membrane protein segment. The Periplasmic segment spans residues 29-144 (LGQQTSYFYM…LKKDGLWQEQ (116 aa)). Heme contacts are provided by His122 and Tyr126.

It belongs to the CcmE/CycJ family.

Its subcellular location is the cell inner membrane. Functionally, heme chaperone required for the biogenesis of c-type cytochromes. Transiently binds heme delivered by CcmC and transfers the heme to apo-cytochromes in a process facilitated by CcmF and CcmH. This chain is Cytochrome c-type biogenesis protein CcmE, found in Chelativorans sp. (strain BNC1).